The sequence spans 160 residues: Cytochrome b6-f complex subunit 4 (160 aa).

3 helical membrane-spanning segments follow: residues 36-56, 95-115, and 131-151; these read LLYT…GLAV, LLGV…PFIE, and TVFL…TLPI.

Belongs to the cytochrome b family. PetD subfamily. The 4 large subunits of the cytochrome b6-f complex are cytochrome b6, subunit IV (17 kDa polypeptide, petD), cytochrome f and the Rieske protein, while the 4 small subunits are petG, petL, petM and petN. The complex functions as a dimer.

The protein localises to the plastid. It localises to the chloroplast thylakoid membrane. Its function is as follows. Component of the cytochrome b6-f complex, which mediates electron transfer between photosystem II (PSII) and photosystem I (PSI), cyclic electron flow around PSI, and state transitions. The sequence is that of Cytochrome b6-f complex subunit 4 from Mesostigma viride (Green alga).